The sequence spans 255 residues: MNTARLNQGTPLLLNAVSKHYAENIVLNQLDLHIPAGQFVAVVGRSGGGKSTLLRLLAGLETPTAGDVLAGTTPLAEIQDDTRMMFQDARLLPWKSVIDNVGLGLKGQWRDAARQALAAVGLENRAGEWPAALSGGQKQRVALARALIHRPGLLLLDEPLGALDALTRLEMQDLIVSLWLKHGFTVLLVTHDVSEAVAMADRVLLIEEGKIGLDLTVDIPRPRRLGSVRLAELEAEVLQRVMQRGHSEQPIRRHG.

One can recognise an ABC transporter domain in the interval 12 to 233 (LLLNAVSKHY…RLGSVRLAEL (222 aa)). Position 44–51 (44–51 (GRSGGGKS)) interacts with ATP.

It belongs to the ABC transporter superfamily. Aliphatic sulfonates importer (TC 3.A.1.17.2) family. As to quaternary structure, the complex is composed of two ATP-binding proteins (SsuB), two transmembrane proteins (SsuC) and a solute-binding protein (SsuA).

The protein resides in the cell inner membrane. The catalysed reaction is ATP + H2O + aliphatic sulfonate-[sulfonate-binding protein]Side 1 = ADP + phosphate + aliphatic sulfonateSide 2 + [sulfonate-binding protein]Side 1.. Functionally, part of the ABC transporter complex SsuABC involved in aliphatic sulfonates import. Responsible for energy coupling to the transport system. In Escherichia coli O6:H1 (strain CFT073 / ATCC 700928 / UPEC), this protein is Aliphatic sulfonates import ATP-binding protein SsuB.